The chain runs to 110 residues: Cytochrome c oxidase subunit 4B (110 aa).

The next 3 helical transmembrane spans lie at Y27–A47, G50–F70, and L88–I108.

Belongs to the cytochrome c oxidase bacterial subunit 4 family.

The protein resides in the cell membrane. It carries out the reaction 4 Fe(II)-[cytochrome c] + O2 + 8 H(+)(in) = 4 Fe(III)-[cytochrome c] + 2 H2O + 4 H(+)(out). The protein is Cytochrome c oxidase subunit 4B (ctaF) of Bacillus subtilis (strain 168).